The following is a 91-amino-acid chain: MQRNLVVLLLLGMVALSSCGLREKHFQKLVKYAVPESTLRTILQTAVHKLGKTQFGCPAYQGYCDDHCQDIKKEEGFCHGMKCKCGIPMGF.

Positions 1-20 (MQRNLVVLLLLGMVALSSCG) are cleaved as a signal peptide. Residues 21-27 (LREKHFQ) constitute a propeptide that is removed on maturation. Residues 54 to 91 (QFGCPAYQGYCDDHCQDIKKEEGFCHGMKCKCGIPMGF) form the BetaSPN-type CS-alpha/beta domain. Cystine bridges form between C57–C78, C64–C83, and C68–C85.

This sequence belongs to the long chain scorpion toxin family. Class 1 subfamily. In terms of tissue distribution, expressed by the venom gland.

It localises to the secreted. Inhibits voltage-gated potassium channel. This chain is Potassium channel toxin BuTXK-beta, found in Buthus israelis (Israeli scorpion).